The primary structure comprises 190 residues: Protein GrpE (190 aa).

Over residues 1–31 the composition is skewed to basic and acidic residues; it reads MTEEQKKYEDAENLESKSENPEEASAEKSEN. The interval 1–39 is disordered; sequence MTEEQKKYEDAENLESKSENPEEASAEKSENGVEDLQAE.

This sequence belongs to the GrpE family. In terms of assembly, homodimer.

Its subcellular location is the cytoplasm. In terms of biological role, participates actively in the response to hyperosmotic and heat shock by preventing the aggregation of stress-denatured proteins, in association with DnaK and GrpE. It is the nucleotide exchange factor for DnaK and may function as a thermosensor. Unfolded proteins bind initially to DnaJ; upon interaction with the DnaJ-bound protein, DnaK hydrolyzes its bound ATP, resulting in the formation of a stable complex. GrpE releases ADP from DnaK; ATP binding to DnaK triggers the release of the substrate protein, thus completing the reaction cycle. Several rounds of ATP-dependent interactions between DnaJ, DnaK and GrpE are required for fully efficient folding. The sequence is that of Protein GrpE from Zymomonas mobilis subsp. mobilis (strain ATCC 31821 / ZM4 / CP4).